The primary structure comprises 94 residues: Cell division topological specificity factor (94 aa).

It belongs to the MinE family.

Its function is as follows. Prevents the cell division inhibition by proteins MinC and MinD at internal division sites while permitting inhibition at polar sites. This ensures cell division at the proper site by restricting the formation of a division septum at the midpoint of the long axis of the cell. This chain is Cell division topological specificity factor, found in Clostridioides difficile (strain 630) (Peptoclostridium difficile).